We begin with the raw amino-acid sequence, 251 residues long: 3-isopropylmalate dehydratase small subunit 1 (251 aa).

A chloroplast-targeting transit peptide spans 1–59 (MAASLQSANPTLSRTLASPNKPSSFATFRSPFLRFNSTSVASNFKPLVSREASSSFVTR).

The protein belongs to the LeuD family. As to quaternary structure, heterodimer of the large LEUC/IIL1 subunit and the small LEUD (SSU1, SSU2 or SSU3) subunits. As to expression, expressed at low levels in roots, root tips, at the basis of the hypocotyls, and in emerging leaves. In young seedlings, expressed in cotyledon epidermal cells. In hypocotyls, expressed in peripheral cells. In seedling roots, expressed in the epidermis, including root hairs, and throughout the cortex. In rosette leaves, expressed in the upper and lower epidermis. In roots of adult plants, expressed in the root tips and cortex of the mature root enclosing the stele. In flowering stalks, expressed in the epidermis. Expressed in the carpel epidermis.

The protein resides in the plastid. It is found in the chloroplast stroma. It catalyses the reaction (2R,3S)-3-isopropylmalate = (2S)-2-isopropylmalate. It participates in amino-acid biosynthesis; L-leucine biosynthesis; L-leucine from 3-methyl-2-oxobutanoate: step 2/4. Functionally, catalyzes the isomerization between 2-isopropylmalate and 3-isopropylmalate, via the formation of 2-isopropylmaleate. Plays an essential role in leucine biosynthesis. Functions in both the biosynthesis of leucine, and in the methionine chain elongation pathway of aliphatic glucosinolate formation. Plays an essential role in female gametophyte development. The protein is 3-isopropylmalate dehydratase small subunit 1 of Arabidopsis thaliana (Mouse-ear cress).